The sequence spans 76 residues: Small ribosomal subunit protein uS17 (76 aa).

Belongs to the universal ribosomal protein uS17 family. Part of the 30S ribosomal subunit.

Its function is as follows. One of the primary rRNA binding proteins, it binds specifically to the 5'-end of 16S ribosomal RNA. The sequence is that of Small ribosomal subunit protein uS17 from Anaplasma phagocytophilum (strain HZ).